Reading from the N-terminus, the 488-residue chain is Secreted triacylglycerol lipase LIP1 (488 aa).

The signal sequence occupies residues 1–26 (MPSMLSLFYLAQSLFLLLLFPLYGHA). The cysteines at positions 119 and 288 are disulfide-linked. N183 carries N-linked (GlcNAc...) asparagine glycosylation. The Nucleophile role is filled by S201. N316 is a glycosylation site (N-linked (GlcNAc...) asparagine). Active-site residues include D348 and H382. Residues 461–488 (SKSGSSLKSHSHSQTHKHRKDVSTISNA) form a disordered region. The span at 469–480 (SHSHSQTHKHRK) shows a compositional bias: basic residues.

This sequence belongs to the AB hydrolase superfamily. Lipase family. Class Lip subfamily.

The protein resides in the secreted. It catalyses the reaction a triacylglycerol + H2O = a diacylglycerol + a fatty acid + H(+). The catalysed reaction is a monoacylglycerol + H2O = glycerol + a fatty acid + H(+). The enzyme catalyses a diacylglycerol + H2O = a monoacylglycerol + a fatty acid + H(+). Inhibited by different metal ions including Fe(2+), Fe(3+), Cu(2+), and Zn(2+). The monovalent ions Na(+) and K(+) exhibit less dramatic inhibition. Functionally, secreted lipase that releases free fatty acids from monoacylglycerol and triacylglycerol but has no phospholipase or lysophospholipase activities. Has minor esterase activity. Due to an absence of fatty acid synthase genes in Malassezia species, secretory lipases are essential for the yeast to generate free fatty acids from degradation of sebum and assimilate them as lipid sources for growth. Plays important roles not only in lipid metabolism but also in the immune response of host cells and pathogenesis. Hydrolyzes lipids, such as Tween 20, 40 and 80, with Tween 80 being the best substrate. The protein is Secreted triacylglycerol lipase LIP1 of Malassezia furfur (Pityriasis versicolor infection agent).